A 105-amino-acid chain; its full sequence is Ribonuclease P protein component 4 (105 aa).

The Zn(2+) site is built by Cys63, Cys66, Cys89, and Cys92.

This sequence belongs to the eukaryotic/archaeal RNase P protein component 4 family. In terms of assembly, consists of a catalytic RNA component and at least 4-5 protein subunits. The cofactor is Zn(2+).

The protein localises to the cytoplasm. The catalysed reaction is Endonucleolytic cleavage of RNA, removing 5'-extranucleotides from tRNA precursor.. Functionally, part of ribonuclease P, a protein complex that generates mature tRNA molecules by cleaving their 5'-ends. This Methanoculleus marisnigri (strain ATCC 35101 / DSM 1498 / JR1) protein is Ribonuclease P protein component 4.